A 270-amino-acid polypeptide reads, in one-letter code: 4-hydroxy-tetrahydrodipicolinate reductase (270 aa).

NAD(+) is bound at residue 7–12 (GANGKM). Arginine 34 contacts NADP(+). NAD(+)-binding positions include 97-99 (GTT) and 121-124 (SGNM). The active-site Proton donor/acceptor is histidine 155. Histidine 156 contributes to the (S)-2,3,4,5-tetrahydrodipicolinate binding site. Lysine 159 acts as the Proton donor in catalysis. 165-166 (GT) serves as a coordination point for (S)-2,3,4,5-tetrahydrodipicolinate.

It belongs to the DapB family.

The protein resides in the cytoplasm. It carries out the reaction (S)-2,3,4,5-tetrahydrodipicolinate + NAD(+) + H2O = (2S,4S)-4-hydroxy-2,3,4,5-tetrahydrodipicolinate + NADH + H(+). It catalyses the reaction (S)-2,3,4,5-tetrahydrodipicolinate + NADP(+) + H2O = (2S,4S)-4-hydroxy-2,3,4,5-tetrahydrodipicolinate + NADPH + H(+). Its pathway is amino-acid biosynthesis; L-lysine biosynthesis via DAP pathway; (S)-tetrahydrodipicolinate from L-aspartate: step 4/4. Catalyzes the conversion of 4-hydroxy-tetrahydrodipicolinate (HTPA) to tetrahydrodipicolinate. In Bartonella quintana (strain Toulouse) (Rochalimaea quintana), this protein is 4-hydroxy-tetrahydrodipicolinate reductase.